Consider the following 733-residue polypeptide: Oligopeptide transporter 8 (733 aa).

14 consecutive transmembrane segments (helical) span residues 42-62 (MWVL…FFWY), 66-86 (PLTI…HLMA), 115-135 (VLIT…HILS), 147-167 (FLPA…WAGL), 209-229 (FFVI…YLFT), 244-264 (SILV…SFGL), 281-301 (FFAS…ITPL), 357-377 (FAVT…HVLI), 413-433 (LWWF…ICIY), 442-462 (WWGA…VGVI), 531-551 (VGTL…MAEI), 596-616 (YSNI…VYLA), 644-664 (ASAV…HFVF), and 677-697 (VLSG…FLAL).

It belongs to the oligopeptide OPT transporter (TC 2.A.67.1) family.

Its subcellular location is the membrane. Its function is as follows. May be involved in the translocation of tetra- and pentapeptides across the cellular membrane in an energy-dependent manner. The polypeptide is Oligopeptide transporter 8 (OPT8) (Arabidopsis thaliana (Mouse-ear cress)).